The chain runs to 217 residues: Redox-sensing transcriptional repressor Rex (217 aa).

A DNA-binding region (H-T-H motif) is located at residues 18-57 (LYYRFLKNLHASGKQRVSSAELSDAVKVDSATIRRDFSYF). 92–97 (GVGNLG) contacts NAD(+).

This sequence belongs to the transcriptional regulatory Rex family. In terms of assembly, homodimer.

It is found in the cytoplasm. Its function is as follows. Modulates transcription in response to changes in cellular NADH/NAD(+) redox state. The protein is Redox-sensing transcriptional repressor Rex of Bacillus pumilus (strain SAFR-032).